A 262-amino-acid chain; its full sequence is Methanethiol S-methyltransferase (262 aa).

5 helical membrane passes run 22–42 (LYSL…IGFV), 55–75 (PGAS…LFAV), 100–120 (ATYV…WQPI), 134–154 (AVLT…TFLI), and 195–215 (GFLM…VFAL).

Belongs to the nurim family.

It localises to the membrane. The enzyme catalyses methanethiol + S-adenosyl-L-methionine = dimethyl sulfide + S-adenosyl-L-homocysteine + H(+). In terms of biological role, catalyzes the methylation of methanethiol (MeSH) to yield dimethylsulphide (DMS). The polypeptide is Methanethiol S-methyltransferase (Pseudomonas deceptionensis).